The primary structure comprises 80 residues: MSFEVLEQLESKIQTAVDTITLLQMEVEELKEDKVKLEAEANELRSQREDLEQKAQQAQQEHAQWQERIRALLGKMDEVE.

Residues 3 to 80 (FEVLEQLESK…ALLGKMDEVE (78 aa)) are a coiled coil.

It belongs to the ZapB family. Homodimer. The ends of the coiled-coil dimer bind to each other, forming polymers. Interacts with FtsZ.

Its subcellular location is the cytoplasm. Its function is as follows. Non-essential, abundant cell division factor that is required for proper Z-ring formation. It is recruited early to the divisome by direct interaction with FtsZ, stimulating Z-ring assembly and thereby promoting cell division earlier in the cell cycle. Its recruitment to the Z-ring requires functional FtsA or ZipA. This Vibrio parahaemolyticus serotype O3:K6 (strain RIMD 2210633) protein is Cell division protein ZapB.